Consider the following 138-residue polypeptide: Gonadotropin subunit beta-2 (138 aa).

Positions 1-21 (MPASSYFLLFFFMNFFSPAQS) are cleaved as a signal peptide. Intrachain disulfides connect Cys-27–Cys-75, Cys-41–Cys-90, Cys-44–Cys-128, Cys-52–Cys-106, Cys-56–Cys-108, and Cys-111–Cys-118. A glycan (N-linked (GlcNAc...) asparagine) is linked at Asn-31.

This sequence belongs to the glycoprotein hormones subunit beta family. Heterodimer of an alpha and a beta chain.

Its subcellular location is the secreted. Its function is as follows. Involved in gametogenesis and steroidogenesis. The polypeptide is Gonadotropin subunit beta-2 (cgbb) (Clarias gariepinus (North African catfish)).